A 186-amino-acid polypeptide reads, in one-letter code: Protein Syd (186 aa).

This sequence belongs to the Syd family.

It is found in the cell inner membrane. Its function is as follows. Interacts with the SecY protein in vivo. May bind preferentially to an uncomplexed state of SecY, thus functioning either as a chelating agent for excess SecY in the cell or as a regulatory factor that negatively controls the translocase function. The chain is Protein Syd from Pseudoalteromonas atlantica (strain T6c / ATCC BAA-1087).